The sequence spans 256 residues: Small ribosomal subunit protein eS1A (256 aa).

Ala-2 carries the N-acetylalanine; partial modification.

The protein belongs to the eukaryotic ribosomal protein eS1 family. In terms of assembly, component of the small ribosomal subunit. Mature ribosomes consist of a small (40S) and a large (60S) subunit. The 40S subunit contains about 33 different proteins and 1 molecule of RNA (18S). The 60S subunit contains about 49 different proteins and 3 molecules of RNA (25S, 5.8S and 5S).

The protein localises to the cytoplasm. This Debaryomyces hansenii (strain ATCC 36239 / CBS 767 / BCRC 21394 / JCM 1990 / NBRC 0083 / IGC 2968) (Yeast) protein is Small ribosomal subunit protein eS1A.